The chain runs to 22 residues: MMPTIFFAGILIVTTIVYLTIV.

In terms of biological role, acts as an interferon antagonist when expressed ex vivo. This chain is Putative ORF3b protein, found in Severe acute respiratory syndrome coronavirus 2 (2019-nCoV).